The sequence spans 80 residues: Large ribosomal subunit protein uL24 (80 aa).

Positions 53 to 80 (HMRPTQSNPQGSIIEREFPIHASNVKKS) are disordered.

This sequence belongs to the universal ribosomal protein uL24 family. As to quaternary structure, part of the 50S ribosomal subunit.

Its function is as follows. One of two assembly initiator proteins, it binds directly to the 5'-end of the 23S rRNA, where it nucleates assembly of the 50S subunit. One of the proteins that surrounds the polypeptide exit tunnel on the outside of the subunit. In Chlorobium luteolum (strain DSM 273 / BCRC 81028 / 2530) (Pelodictyon luteolum), this protein is Large ribosomal subunit protein uL24.